A 419-amino-acid chain; its full sequence is UDP-N-acetylglucosamine 1-carboxyvinyltransferase (419 aa).

22 to 23 is a binding site for phosphoenolpyruvate; it reads KN. Residue Arg-91 participates in UDP-N-acetyl-alpha-D-glucosamine binding. Cys-115 acts as the Proton donor in catalysis. 2-(S-cysteinyl)pyruvic acid O-phosphothioketal is present on Cys-115. UDP-N-acetyl-alpha-D-glucosamine is bound by residues 120 to 124, 160 to 163, Asp-305, and Ile-327; these read RPVDL and KVSV.

Belongs to the EPSP synthase family. MurA subfamily.

The protein localises to the cytoplasm. The enzyme catalyses phosphoenolpyruvate + UDP-N-acetyl-alpha-D-glucosamine = UDP-N-acetyl-3-O-(1-carboxyvinyl)-alpha-D-glucosamine + phosphate. It functions in the pathway cell wall biogenesis; peptidoglycan biosynthesis. In terms of biological role, cell wall formation. Adds enolpyruvyl to UDP-N-acetylglucosamine. The protein is UDP-N-acetylglucosamine 1-carboxyvinyltransferase of Klebsiella pneumoniae subsp. pneumoniae (strain ATCC 700721 / MGH 78578).